The primary structure comprises 475 residues: UDP-N-acetylmuramoylalanine--D-glutamate ligase (475 aa).

Position 130–136 (130–136 (GTNGKTT)) interacts with ATP.

This sequence belongs to the MurCDEF family.

The protein resides in the cytoplasm. It carries out the reaction UDP-N-acetyl-alpha-D-muramoyl-L-alanine + D-glutamate + ATP = UDP-N-acetyl-alpha-D-muramoyl-L-alanyl-D-glutamate + ADP + phosphate + H(+). It participates in cell wall biogenesis; peptidoglycan biosynthesis. In terms of biological role, cell wall formation. Catalyzes the addition of glutamate to the nucleotide precursor UDP-N-acetylmuramoyl-L-alanine (UMA). The chain is UDP-N-acetylmuramoylalanine--D-glutamate ligase from Corynebacterium diphtheriae (strain ATCC 700971 / NCTC 13129 / Biotype gravis).